Here is a 426-residue protein sequence, read N- to C-terminus: Adenylosuccinate synthetase (426 aa).

GTP-binding positions include G14–K20 and G42–T44. D15 (proton acceptor) is an active-site residue. Mg(2+)-binding residues include D15 and G42. Residues D15 to K18, N40 to H43, T130, R144, Q224, T239, and R303 each bind IMP. The Proton donor role is filled by H43. T299 to R305 contacts substrate. GTP contacts are provided by residues R305, L331 to D333, and S413 to G415.

It belongs to the adenylosuccinate synthetase family. Homodimer. Mg(2+) is required as a cofactor.

The protein resides in the cytoplasm. It carries out the reaction IMP + L-aspartate + GTP = N(6)-(1,2-dicarboxyethyl)-AMP + GDP + phosphate + 2 H(+). Its pathway is purine metabolism; AMP biosynthesis via de novo pathway; AMP from IMP: step 1/2. Its function is as follows. Plays an important role in the de novo pathway of purine nucleotide biosynthesis. Catalyzes the first committed step in the biosynthesis of AMP from IMP. The protein is Adenylosuccinate synthetase of Malacoplasma penetrans (strain HF-2) (Mycoplasma penetrans).